A 181-amino-acid chain; its full sequence is Photosystem I assembly protein Ycf4 (181 aa).

The next 2 helical transmembrane spans lie at 19–39 (YFWASLLLVGGLMFLLAGISS) and 61–81 (IVMMFYGTLSFGLSIYIMATL).

This sequence belongs to the Ycf4 family.

It localises to the plastid. The protein localises to the chloroplast thylakoid membrane. In terms of biological role, seems to be required for the assembly of the photosystem I complex. The protein is Photosystem I assembly protein Ycf4 of Thalassiosira pseudonana (Marine diatom).